We begin with the raw amino-acid sequence, 178 residues long: Orotate phosphoribosyltransferase (178 aa).

5-phospho-alpha-D-ribose 1-diphosphate contacts are provided by residues Arg92, Lys93, Lys96, and Glu118–Ser126. Orotate is bound by residues Thr122 and Arg150.

Belongs to the purine/pyrimidine phosphoribosyltransferase family. PyrE subfamily. As to quaternary structure, homodimer. The cofactor is Mg(2+).

The catalysed reaction is orotidine 5'-phosphate + diphosphate = orotate + 5-phospho-alpha-D-ribose 1-diphosphate. It participates in pyrimidine metabolism; UMP biosynthesis via de novo pathway; UMP from orotate: step 1/2. Catalyzes the transfer of a ribosyl phosphate group from 5-phosphoribose 1-diphosphate to orotate, leading to the formation of orotidine monophosphate (OMP). The protein is Orotate phosphoribosyltransferase of Archaeoglobus fulgidus (strain ATCC 49558 / DSM 4304 / JCM 9628 / NBRC 100126 / VC-16).